The chain runs to 876 residues: Alanine--tRNA ligase (876 aa).

Zn(2+) contacts are provided by His568, His572, Cys670, and His674.

It belongs to the class-II aminoacyl-tRNA synthetase family. Requires Zn(2+) as cofactor.

It is found in the cytoplasm. It carries out the reaction tRNA(Ala) + L-alanine + ATP = L-alanyl-tRNA(Ala) + AMP + diphosphate. Catalyzes the attachment of alanine to tRNA(Ala) in a two-step reaction: alanine is first activated by ATP to form Ala-AMP and then transferred to the acceptor end of tRNA(Ala). Also edits incorrectly charged Ser-tRNA(Ala) and Gly-tRNA(Ala) via its editing domain. The protein is Alanine--tRNA ligase of Geotalea uraniireducens (strain Rf4) (Geobacter uraniireducens).